A 972-amino-acid chain; its full sequence is N-alpha-acetyltransferase 25, NatB auxiliary subunit (972 aa).

TPR repeat units follow at residues 11–44 (NDRRLRPIYDYLDNGNNKMAIQQADKLLKKHKDL), 45–78 (HCAKVLKAIGLQRTGKQEEAFTLAQEVAALEPTD), 79–112 (DNSLQALTILYREMHRPELVTKLYEAAVKKVPNS), and 114–146 (EYHSHLFMAYARVGEYKKMQQAGMALYKIVPKN).

The protein belongs to the MDM20/NAA25 family. In terms of assembly, component of the N-terminal acetyltransferase B (NatB) complex which is composed of NAA20 and NAA25.

The protein localises to the cytoplasm. In terms of biological role, non-catalytic subunit of the NatB complex which catalyzes acetylation of the N-terminal methionine residues of peptides beginning with Met-Asp, Met-Glu, Met-Asn and Met-Gln. May play a role in normal cell-cycle progression. The sequence is that of N-alpha-acetyltransferase 25, NatB auxiliary subunit (NAA25) from Homo sapiens (Human).